A 152-amino-acid polypeptide reads, in one-letter code: Nucleoside diphosphate kinase A (152 aa).

Residues Lys12, Phe60, Arg88, and Thr94 each coordinate ATP. Lys100 is covalently cross-linked (Glycyl lysine isopeptide (Lys-Gly) (interchain with G-Cter in ubiquitin)). ATP is bound by residues Arg105 and Asn115. His118 (pros-phosphohistidine intermediate) is an active-site residue. Phosphoserine occurs at positions 120, 122, and 125.

This sequence belongs to the NDK family. Hexamer of two different chains: An and B (A6, A5B, A4B2, A3B3, A2B4, AB5, B6). Interacts with PRUNE1. Component of the SET complex, composed of at least ANP32A, APEX1, HMGB2, NME1, SET and TREX1. Within this complex, interacts directly with SET. Also interacts with TREX1, but only following translocation to the nucleus. Requires Mg(2+) as cofactor.

The protein resides in the cytoplasm. Its subcellular location is the nucleus. The enzyme catalyses a 2'-deoxyribonucleoside 5'-diphosphate + ATP = a 2'-deoxyribonucleoside 5'-triphosphate + ADP. It carries out the reaction a ribonucleoside 5'-diphosphate + ATP = a ribonucleoside 5'-triphosphate + ADP. Its activity is regulated as follows. Autophosphorylation at His-118 increases serine/threonine protein kinase activity of the enzyme. Interaction with the SET complex inhibits exonuclease activity. In terms of biological role, major role in the synthesis of nucleoside triphosphates other than ATP. The ATP gamma phosphate is transferred to the NDP beta phosphate via a ping-pong mechanism, using a phosphorylated active-site intermediate. Possesses nucleoside-diphosphate kinase, serine/threonine-specific protein kinase, geranyl and farnesyl pyrophosphate kinase, histidine protein kinase and 3'-5' exonuclease activities. Involved in cell proliferation, differentiation and development, signal transduction, G protein-coupled receptor endocytosis, and gene expression. Required for neural development including neural patterning and cell fate determination. During GZMA-mediated cell death, works in concert with TREX1. NME1 nicks one strand of DNA and TREX1 removes bases from the free 3' end to enhance DNA damage and prevent DNA end reannealing and rapid repair. In Canis lupus familiaris (Dog), this protein is Nucleoside diphosphate kinase A (NME1).